The sequence spans 434 residues: MRVVILGSGVVGVASAWYLAKDGHDVTVIDRQDGPAQETSAGNAGQISPGYAAPWAAPGVPLKAIKWMFQRHAPLAIHLDGSASQLRWMWQMLRNCDTSHYMINKSRMVRLAEYSRDCLKDLREDTGIQYEGRQGGTLQLFRTEQQFDNAAKDIAVLDDAGVPYSLLTADQLATVEPALAKVAHKLTGGLRLPNDETGDCKLFTERLAKMAEQAGVKFIFNRSVEKLLVDGDQIAGVLWGDDIIKADAYVVAFGAYSTALLAGLVSIPVYPLKGYSLTIPITNPAGAPYSTVLDETYKIAITRFDDRIRVGGMAEIVGFNTQLEQARRETLEMVVGDLYPDGGNISQATFWTGLRPMTPDGTPIVGRTSLKNLYLNTGHGTLGWTMACGSGQLLADIMSGRRPAILADDLSVSRYSADFRPLNVAPLHDAHPIR.

3 to 17 (VVILGSGVVGVASAW) serves as a coordination point for FAD.

The protein belongs to the DadA oxidoreductase family. FAD serves as cofactor.

It catalyses the reaction a D-alpha-amino acid + A + H2O = a 2-oxocarboxylate + AH2 + NH4(+). The protein operates within amino-acid degradation; D-alanine degradation; NH(3) and pyruvate from D-alanine: step 1/1. Oxidative deamination of D-amino acids. This chain is D-amino acid dehydrogenase, found in Yersinia enterocolitica serotype O:8 / biotype 1B (strain NCTC 13174 / 8081).